The following is a 688-amino-acid chain: UvrABC system protein B (688 aa).

The region spanning 31 to 188 (GRVNAGEPDV…RKFVSMQYQR (158 aa)) is the Helicase ATP-binding domain. ATP is bound at residue 44 to 51 (GATGTGKS). The short motif at 97-120 (YYDYYQPEAYVPQTDTFIEKDSSV) is the Beta-hairpin element. Residues 434-587 (QIDDLLEQIR…QVAYNTEHGI (154 aa)) form the Helicase C-terminal domain. A disordered region spans residues 607 to 632 (GEDTKKMLEGRGGGKRSPTPNLRREG). Residues 642–677 (ETIISDLNDQMLQAAGELKFELAARLRDELGDLKRE) form the UVR domain.

This sequence belongs to the UvrB family. In terms of assembly, forms a heterotetramer with UvrA during the search for lesions. Interacts with UvrC in an incision complex.

The protein localises to the cytoplasm. Its function is as follows. The UvrABC repair system catalyzes the recognition and processing of DNA lesions. A damage recognition complex composed of 2 UvrA and 2 UvrB subunits scans DNA for abnormalities. Upon binding of the UvrA(2)B(2) complex to a putative damaged site, the DNA wraps around one UvrB monomer. DNA wrap is dependent on ATP binding by UvrB and probably causes local melting of the DNA helix, facilitating insertion of UvrB beta-hairpin between the DNA strands. Then UvrB probes one DNA strand for the presence of a lesion. If a lesion is found the UvrA subunits dissociate and the UvrB-DNA preincision complex is formed. This complex is subsequently bound by UvrC and the second UvrB is released. If no lesion is found, the DNA wraps around the other UvrB subunit that will check the other stand for damage. The chain is UvrABC system protein B from Clavibacter michiganensis subsp. michiganensis (strain NCPPB 382).